The sequence spans 339 residues: Glycerol-3-phosphate dehydrogenase [NAD(P)+] (339 aa).

NADPH-binding residues include Ser-15, Tyr-16, His-36, and Lys-110. Positions 110, 139, and 141 each coordinate sn-glycerol 3-phosphate. Ala-143 provides a ligand contact to NADPH. Sn-glycerol 3-phosphate contacts are provided by Lys-195, Asp-248, Ser-258, Arg-259, and Asn-260. The active-site Proton acceptor is Lys-195. Arg-259 contributes to the NADPH binding site. Residues Val-283 and Glu-285 each contribute to the NADPH site.

This sequence belongs to the NAD-dependent glycerol-3-phosphate dehydrogenase family.

The protein localises to the cytoplasm. The enzyme catalyses sn-glycerol 3-phosphate + NAD(+) = dihydroxyacetone phosphate + NADH + H(+). It catalyses the reaction sn-glycerol 3-phosphate + NADP(+) = dihydroxyacetone phosphate + NADPH + H(+). It functions in the pathway membrane lipid metabolism; glycerophospholipid metabolism. In terms of biological role, catalyzes the reduction of the glycolytic intermediate dihydroxyacetone phosphate (DHAP) to sn-glycerol 3-phosphate (G3P), the key precursor for phospholipid synthesis. The chain is Glycerol-3-phosphate dehydrogenase [NAD(P)+] from Enterobacter sp. (strain 638).